The primary structure comprises 118 residues: Large ribosomal subunit protein bL20 (118 aa).

It belongs to the bacterial ribosomal protein bL20 family.

Binds directly to 23S ribosomal RNA and is necessary for the in vitro assembly process of the 50S ribosomal subunit. It is not involved in the protein synthesizing functions of that subunit. This is Large ribosomal subunit protein bL20 from Campylobacter curvus (strain 525.92).